The chain runs to 468 residues: Siroheme synthase 3 (468 aa).

A precorrin-2 dehydrogenase /sirohydrochlorin ferrochelatase region spans residues 1–204 (MDYLPIFCRL…GDSASANQLA (204 aa)). Residues 22 to 23 (EV) and 43 to 44 (PE) contribute to the NAD(+) site. S128 is modified (phosphoserine). Residues 216-468 (GEVVLVGAGP…GAADAALASA (253 aa)) form a uroporphyrinogen-III C-methyltransferase region. Residue P225 participates in S-adenosyl-L-methionine binding. D248 (proton acceptor) is an active-site residue. K270 (proton donor) is an active-site residue. S-adenosyl-L-methionine-binding positions include 301 to 303 (GGD), I306, 331 to 332 (TA), M383, and G412.

The protein in the N-terminal section; belongs to the precorrin-2 dehydrogenase / sirohydrochlorin ferrochelatase family. In the C-terminal section; belongs to the precorrin methyltransferase family.

The enzyme catalyses uroporphyrinogen III + 2 S-adenosyl-L-methionine = precorrin-2 + 2 S-adenosyl-L-homocysteine + H(+). It carries out the reaction precorrin-2 + NAD(+) = sirohydrochlorin + NADH + 2 H(+). It catalyses the reaction siroheme + 2 H(+) = sirohydrochlorin + Fe(2+). It functions in the pathway cofactor biosynthesis; adenosylcobalamin biosynthesis; precorrin-2 from uroporphyrinogen III: step 1/1. Its pathway is cofactor biosynthesis; adenosylcobalamin biosynthesis; sirohydrochlorin from precorrin-2: step 1/1. It participates in porphyrin-containing compound metabolism; siroheme biosynthesis; precorrin-2 from uroporphyrinogen III: step 1/1. The protein operates within porphyrin-containing compound metabolism; siroheme biosynthesis; siroheme from sirohydrochlorin: step 1/1. It functions in the pathway porphyrin-containing compound metabolism; siroheme biosynthesis; sirohydrochlorin from precorrin-2: step 1/1. In terms of biological role, multifunctional enzyme that catalyzes the SAM-dependent methylations of uroporphyrinogen III at position C-2 and C-7 to form precorrin-2 via precorrin-1. Then it catalyzes the NAD-dependent ring dehydrogenation of precorrin-2 to yield sirohydrochlorin. Finally, it catalyzes the ferrochelation of sirohydrochlorin to yield siroheme. In Aeromonas hydrophila subsp. hydrophila (strain ATCC 7966 / DSM 30187 / BCRC 13018 / CCUG 14551 / JCM 1027 / KCTC 2358 / NCIMB 9240 / NCTC 8049), this protein is Siroheme synthase 3.